We begin with the raw amino-acid sequence, 740 residues long: ATP-dependent RNA helicase DDX1 (740 aa).

The interval 1–295 (MAAFSEMGVM…APKALIVEPS (295 aa)) is necessary for interaction with HNRNPK. The tract at residues 1–448 (MAAFSEMGVM…DTVHHVVVPV (448 aa)) is interaction with dsRNA. The tract at residues 1 to 525 (MAAFSEMGVM…KIDCDNLEQY (525 aa)) is necessary for interaction with RELA. The region spanning 2-428 (AAFSEMGVMP…SEKIMHFPTW (427 aa)) is the Helicase ATP-binding domain. 46 to 53 (AETGSGKT) lines the ATP pocket. In terms of domain architecture, B30.2/SPRY spans 70–247 (DQQEGKKGKA…LKFNFGEEEF (178 aa)). Lys239 and Lys268 each carry N6-acetyllysine. Lys281 bears the N6-acetyllysine; alternate mark. A Glycyl lysine isopeptide (Lys-Gly) (interchain with G-Cter in SUMO2); alternate cross-link involves residue Lys281. Residues 370–373 (DEAD) carry the DEAD box motif. Ser481 carries the phosphoserine modification. One can recognise a Helicase C-terminal domain in the interval 493 to 681 (KGEYAVRAIK…QVEPDIKVPV (189 aa)). The interval 525–740 (YFMQQGGGPD…YLPNQLFRTF (216 aa)) is necessary for interaction with HNRNPK.

It belongs to the DEAD box helicase family. DDX1 subfamily. As to quaternary structure, found in a multi-helicase-TICAM1 complex at least composed of DHX36, DDX1, DDX21 and TICAM1; this complex exists in resting cells with or without poly(I:C) RNA ligand stimulation. Interacts with DHX36. Interacts (via B30.2/SPRY domain) with DDX21 (via N-terminus); this interaction serves as bridges to TICAM1. Interacts with FAM98A (via N- and C-terminus). Interacts with PHF5A (via C-terminus). Interacts with MBNL1. Interacts with CSTF2. Interacts with HNRNPK. Interacts with ATM. Interacts with RELA (via C-terminus). Component of the tRNA-splicing ligase complex. Interacts with PQBP1. Interacts with ERCC6. In terms of processing, phosphorylated by ATM kinase; phosphorylation is increased in response to ionizing radiation (IR).

The protein localises to the nucleus. Its subcellular location is the cytoplasm. The protein resides in the cytoplasmic granule. It localises to the cytosol. It is found in the mitochondrion. It carries out the reaction ATP + H2O = ADP + phosphate + H(+). Acts as an ATP-dependent RNA helicase, able to unwind both RNA-RNA and RNA-DNA duplexes. Possesses 5' single-stranded RNA overhang nuclease activity. Possesses ATPase activity on various RNA, but not DNA polynucleotides. May play a role in RNA clearance at DNA double-strand breaks (DSBs), thereby facilitating the template-guided repair of transcriptionally active regions of the genome. Together with RELA, acts as a coactivator to enhance NF-kappa-B-mediated transcriptional activation. Acts as a positive transcriptional regulator of cyclin CCND2 expression. Binds to the cyclin CCND2 promoter region. Associates with chromatin at the NF-kappa-B promoter region via association with RELA. Binds to poly(A) RNA. May be involved in 3'-end cleavage and polyadenylation of pre-mRNAs. Component of the tRNA-splicing ligase complex required to facilitate the enzymatic turnover of catalytic subunit RTCB: together with archease (ZBTB8OS), acts by facilitating the guanylylation of RTCB, a key intermediate step in tRNA ligation. Component of a multi-helicase-TICAM1 complex that acts as a cytoplasmic sensor of viral double-stranded RNA (dsRNA) and plays a role in the activation of a cascade of antiviral responses including the induction of pro-inflammatory cytokines via the adapter molecule TICAM1. Specifically binds (via helicase ATP-binding domain) on both short and long poly(I:C) dsRNA. This chain is ATP-dependent RNA helicase DDX1 (Ddx1), found in Rattus norvegicus (Rat).